The chain runs to 486 residues: 2-hydroxymuconic semialdehyde dehydrogenase (486 aa).

Catalysis depends on residues Glu-254 and Cys-288.

It belongs to the aldehyde dehydrogenase family. As to quaternary structure, homodimer.

The enzyme catalyses (2Z,4E)-2-hydroxy-6-oxohexa-2,4-dienoate + NAD(+) + H2O = (2Z,4E)-2-hydroxyhexa-2,4-dienedioate + NADH + 2 H(+). It functions in the pathway aromatic compound metabolism; benzoate degradation via hydroxylation. In terms of biological role, 2-hydroxymuconic acid semialdehyde can be converted to 2-hydroxypent-2,4-dienoate either directly by the action of 2-hydroxymuconic semialdehyde hydrolase (HMSH) or by the action of three sequential enzymes, the first of which is HMSD. Can oxidize not only 2-hydroxymuconic semialdehyde and its analogs but also benzaldehyde and its analogs. In Pseudomonas putida (Arthrobacter siderocapsulatus), this protein is 2-hydroxymuconic semialdehyde dehydrogenase (xylG).